The primary structure comprises 76 residues: Acyl carrier protein (76 aa).

The Carrier domain occupies 1-75 (MIFEKIKDLI…DIVFYITKNT (75 aa)). Residue Ser35 is modified to O-(pantetheine 4'-phosphoryl)serine.

This sequence belongs to the acyl carrier protein (ACP) family. Post-translationally, 4'-phosphopantetheine is transferred from CoA to a specific serine of apo-ACP by AcpS. This modification is essential for activity because fatty acids are bound in thioester linkage to the sulfhydryl of the prosthetic group.

It localises to the cytoplasm. It functions in the pathway lipid metabolism; fatty acid biosynthesis. Its function is as follows. Carrier of the growing fatty acid chain in fatty acid biosynthesis. The sequence is that of Acyl carrier protein from Aster yellows witches'-broom phytoplasma (strain AYWB).